We begin with the raw amino-acid sequence, 205 residues long: Small ribosomal subunit protein uS4 (205 aa).

Residues 18–46 (NIWGRPKSPVNRREYGPGQHGQRRKGKLS) form a disordered region. Residues 94-157 (RRLDTVVYRA…KQLTFVLEAN (64 aa)) form the S4 RNA-binding domain.

It belongs to the universal ribosomal protein uS4 family. In terms of assembly, part of the 30S ribosomal subunit. Contacts protein S5. The interaction surface between S4 and S5 is involved in control of translational fidelity.

Functionally, one of the primary rRNA binding proteins, it binds directly to 16S rRNA where it nucleates assembly of the body of the 30S subunit. With S5 and S12 plays an important role in translational accuracy. The polypeptide is Small ribosomal subunit protein uS4 (Rhodopseudomonas palustris (strain BisB18)).